We begin with the raw amino-acid sequence, 133 residues long: Large ribosomal subunit protein uL15 (133 aa).

The disordered stretch occupies residues 1-64 (MGLENLKPAK…QPLQRRLPKI (64 aa)).

Belongs to the universal ribosomal protein uL15 family. In terms of assembly, part of the 50S ribosomal subunit.

Its function is as follows. Binds to the 23S rRNA. This Helicobacter pylori (strain J99 / ATCC 700824) (Campylobacter pylori J99) protein is Large ribosomal subunit protein uL15.